Here is a 442-residue protein sequence, read N- to C-terminus: 4-alpha-glucanotransferase (442 aa).

Residues Asp-13, Asn-15, Asp-17, Val-19, and Asp-21 each coordinate Ca(2+). Asp-186 (nucleophile) is an active-site residue. Residue Glu-216 is the Proton donor of the active site.

This sequence belongs to the glycosyl hydrolase 13 family. In terms of assembly, monomer. The cofactor is Ca(2+).

It localises to the cytoplasm. It catalyses the reaction Transfers a segment of a (1-&gt;4)-alpha-D-glucan to a new position in an acceptor, which may be glucose or a (1-&gt;4)-alpha-D-glucan.. In terms of biological role, hydrolyzes the 1,4-alpha-glycoside bonds in oligomeric and polymeric 1,4-alpha-glucans and transfers oligosaccharides (maltotriose being the shortest one) to acceptor maltodextrins. In Thermotoga neapolitana, this protein is 4-alpha-glucanotransferase (mgtA).